Consider the following 341-residue polypeptide: Phenylalanine--tRNA ligase alpha subunit (341 aa).

Glu256 serves as a coordination point for Mg(2+).

The protein belongs to the class-II aminoacyl-tRNA synthetase family. Phe-tRNA synthetase alpha subunit type 1 subfamily. As to quaternary structure, tetramer of two alpha and two beta subunits. It depends on Mg(2+) as a cofactor.

It localises to the cytoplasm. It carries out the reaction tRNA(Phe) + L-phenylalanine + ATP = L-phenylalanyl-tRNA(Phe) + AMP + diphosphate + H(+). This is Phenylalanine--tRNA ligase alpha subunit from Leptospira biflexa serovar Patoc (strain Patoc 1 / Ames).